The chain runs to 356 residues: Guanine nucleotide-binding protein alpha-2 subunit (356 aa).

G2 carries N-myristoyl glycine lipidation. A lipid anchor (S-palmitoyl cysteine) is attached at C4. Residues 32–356 (RTVKLLLLGA…QSNLHKSGLY (325 aa)) enclose the G-alpha domain. The G1 motif stretch occupies residues 35–48 (KLLLLGAGECGKST). Positions 43, 45, 46, 47, 48, 153, 178, 184, 206, 272, 273, 275, and 328 each coordinate GTP. S47 provides a ligand contact to Mg(2+). The tract at residues 176–184 (DTLLLRTKT) is G2 motif. T184 contacts Mg(2+). The tract at residues 199–208 (FRVFDVGGQR) is G3 motif. The tract at residues 268-275 (ILFLNKKD) is G4 motif. Residues 326–331 (TCATDT) are G5 motif.

Belongs to the G-alpha family. G(q) subfamily. As to quaternary structure, g proteins are composed of 3 units; alpha, beta and gamma. The alpha chain contains the guanine nucleotide binding site. It depends on Mg(2+) as a cofactor.

Guanine nucleotide-binding proteins (G proteins) are involved as modulators or transducers in various transmembrane signaling systems. Involved in behavioral responses to P.aeruginosa by controlling the expression of daf-7, a member of the TGF-beta family, in ASJ sensory neurons. This chain is Guanine nucleotide-binding protein alpha-2 subunit (gpa-2), found in Caenorhabditis elegans.